Here is a 203-residue protein sequence, read N- to C-terminus: Small ribosomal subunit protein uS4 (203 aa).

Residues 93–153 (QRLDSVVYRL…EKSKNILPIQ (61 aa)) enclose the S4 RNA-binding domain.

The protein belongs to the universal ribosomal protein uS4 family. In terms of assembly, part of the 30S ribosomal subunit. Contacts protein S5. The interaction surface between S4 and S5 is involved in control of translational fidelity.

Its function is as follows. One of the primary rRNA binding proteins, it binds directly to 16S rRNA where it nucleates assembly of the body of the 30S subunit. With S5 and S12 plays an important role in translational accuracy. This is Small ribosomal subunit protein uS4 from Leuconostoc mesenteroides subsp. mesenteroides (strain ATCC 8293 / DSM 20343 / BCRC 11652 / CCM 1803 / JCM 6124 / NCDO 523 / NBRC 100496 / NCIMB 8023 / NCTC 12954 / NRRL B-1118 / 37Y).